A 154-amino-acid chain; its full sequence is Cytochrome c-550 (154 aa).

The N-terminal stretch at 1-20 (MKISIYATLAALSLALPAVA) is a signal peptide. Gln-21 is modified (pyrrolidone carboxylic acid). 4 residues coordinate heme c: Cys-35, Cys-38, His-39, and Met-120. Residues 150–154 (EGAAN) constitute a propeptide that is removed on maturation.

In terms of processing, binds 1 heme c group covalently per subunit.

The polypeptide is Cytochrome c-550 (cyc) (Paracoccus versutus (Thiobacillus versutus)).